We begin with the raw amino-acid sequence, 111 residues long: Cytochrome c3, 26 kDa (111 aa).

Residues histidine 30, histidine 33, cysteine 38, cysteine 41, histidine 42, histidine 43, cysteine 54, cysteine 59, histidine 60, histidine 77, cysteine 86, cysteine 89, histidine 90, cysteine 105, cysteine 108, and histidine 109 each coordinate heme c.

In terms of assembly, homodimer. Heme c serves as cofactor.

The protein localises to the periplasm. Participates in sulfate respiration coupled with phosphorylation by transferring electrons from the enzyme dehydrogenase to ferredoxin. This chain is Cytochrome c3, 26 kDa, found in Desulfomicrobium norvegicum (strain DSM 1741 / NCIMB 8310) (Desulfovibrio baculatus (strain Norway 4)).